A 219-amino-acid polypeptide reads, in one-letter code: Elongation factor Ts, chloroplastic (219 aa).

Belongs to the EF-Ts family.

It is found in the plastid. It localises to the chloroplast. Functionally, associates with the EF-Tu.GDP complex and induces the exchange of GDP to GTP. It remains bound to the aminoacyl-tRNA.EF-Tu.GTP complex up to the GTP hydrolysis stage on the ribosome. The protein is Elongation factor Ts, chloroplastic (tsf) of Guillardia theta (Cryptophyte).